Reading from the N-terminus, the 1447-residue chain is MDVGVTPRRHNPVDSICRKLQTIQRRDQEINSPFQIPKFQTNSYDSPHSGLRFNLEAILKKHTVRPDDSDSASSAGMLTPTASPGPGSSCNTPRAPITPVNATYSITSTLGTLGTIGDRRTSGTYSRPFRRNCSTPSAQTGDNYFNFTPRYSTQSQGPDTDVRTSKIPTPGLFSYNLNFSSDISNMDSELAYPALVVKRLSLGEGSLFTSEPKKESMAEVSLICEEDLLDTIFQACDTQCRGKVYVSHIVDFLRHTTCRSSEDSGLEELCNMLDPERKDISIDLDTYHAIMKEWIEDCRNQGKDLKNDTQQESSKLRDSLSAKRSALLNMTSGSLEAFGGEASRADLETSDLVFCVADLQLNNQKLQEEVRKLKQAVENMEDTNQKLIEENEELKTQAKMGQQLLQKEKMLKEEVEEMKLSLTSSEESRAQAAAQRKQMERENQSLISKIAALQEENMKVTLEAEELQKKMNDLCDLNADLQVQIHSFDAILADKESLIQEKNKQMDELKVAVVEYSSVTELLRADKNKLESQMQMMQPDVTIPGLSLSVAYRLNQTSSGSLQTELALAQNPLEGLEHLSTSVCFASSLDETLDREVLLLLQGPTPEQLSLEFKSLISRLKREFKEDGLTFLTAIRSLTENSETQEANTDLKMQGLEVQLEQRRTDWIRSLEQLDQYRDSLERELLKMASNMRRSRTEILHLSVKVQEQENQKQQLREEVDRLKTPLDNREASSQTPDHLQQVVEELDGPSLEWDEEYVLSESPPLQELGPDQQMLEELCCDEEVLQALKQEEEEPTETVSDKEKITAKSEGEGEATYDSGVENEEPQRDFTLSHMCLPDKKSERESNEAPFVGEGGEQRPCMSLKEEDRLPECTGPEDAHEQAAPLPHTHCECAGDQPLTYDNLEVTSVKDHILSTEPSSLMTCELVSPSTGHPEVGNSITGRTEQLVGTNGEPEEERLTTGADMSDLQRLGEGQLSKVSAKSDKSLLLPVAEEEEAMPEAVEVTSAGVNSPDKHKTGSKKTVVTSDSNSTGSADSLKDPSEKVKDMTFDPAASEDNIPTVPATQSPKKDPLASRNKLKKEMSSMEVIEEQKAQEDGEPTVVTEKEGDTSVSSENASDSTKDDKNSLSPSDKEIEAEFHRLSLGFKCDMFTLEKRLRLEERSRDLAEENVRKEVISCKALLQALIPRCEEDNQSMEIIHRVQKNLEILVQSMTRVSSRSEMLGAIHQETRVGKTVEVMIQHVENLRRMYTKEHAELLELRENLTPNERSFGSHSERDDFRNKKQTTSNIFKTTSRRISIATIPRSIGGQTHFDMPKDMAETEVERLSRRSPWNMAAKRPPLKRFVSSGTWADIDEPTLMNSPTPSPTDNAPPSLMEGRPAVSRGARGIWIWVALFVVLAVLLALLASLMLQPAVDAAPVGTGDSWMTIQQLLWPYTGLRHNGQPPV.

Residues Met1–Gly1388 lie on the Cytoplasmic side of the membrane. Disordered regions lie at residues Val64–Pro96 and Leu420–Met439. A compositionally biased stretch (polar residues) spans Ser71–Thr92. 2 coiled-coil regions span residues Phe354 to Ser518 and Thr665 to Glu731. The span at Leu420 to Arg436 shows a compositional bias: low complexity. Disordered stretches follow at residues Lys790 to Gln828, Lys841 to Arg860, Pro991 to Asp1132, Asn1267 to Asn1289, and Asp1355 to Arg1379. Over residues Val800–Gly812 the composition is skewed to basic and acidic residues. A compositionally biased stretch (polar residues) spans Lys1021 to Ala1035. Composition is skewed to basic and acidic residues over residues Ser1037–Thr1049 and Lys1080–Glu1096. The tract at residues Arg1076–Thr1265 is necessary for spindle and spindle pole localization. The span at Thr1110 to Asp1119 shows a compositional bias: polar residues. Residues Ser1120–Asp1132 are compositionally biased toward basic and acidic residues. Positions Leu1359–Ala1371 are enriched in polar residues. Residues Gly1388 to Val1447 form a necessary for nuclear membrane localization region. The chain crosses the membrane as a helical; Anchor for type IV membrane protein span at residues Ile1389–Leu1409. The Lumenal segment spans residues Met1410 to Val1447.

This sequence belongs to the IRAG2 family.

The protein resides in the endoplasmic reticulum membrane. It is found in the nucleus envelope. Its subcellular location is the cytoplasm. It localises to the cytoskeleton. The protein localises to the microtubule organizing center. The protein resides in the centrosome. It is found in the spindle pole. Its subcellular location is the chromosome. Functionally, a maternally expressed membrane and cytoskeletal linker protein, which is essential for attachment of the centrosome to the male pronucleus. Promotes male and female pronucleus congression and subsequent fusion after fertilization. Congression is mediated by the sperm aster microtubules. The sequence is that of Inositol 1,4,5-triphosphate receptor associated 2 (irag2) from Danio rerio (Zebrafish).